The following is a 430-amino-acid chain: Serine--tRNA ligase (430 aa).

Residue 236–238 participates in L-serine binding; the sequence is TAE. 267 to 269 provides a ligand contact to ATP; the sequence is RSE. Glu290 lines the L-serine pocket. ATP is bound at residue 354–357; the sequence is EISS. An L-serine-binding site is contributed by Ser390.

Belongs to the class-II aminoacyl-tRNA synthetase family. Type-1 seryl-tRNA synthetase subfamily. Homodimer. The tRNA molecule binds across the dimer.

It is found in the cytoplasm. The catalysed reaction is tRNA(Ser) + L-serine + ATP = L-seryl-tRNA(Ser) + AMP + diphosphate + H(+). The enzyme catalyses tRNA(Sec) + L-serine + ATP = L-seryl-tRNA(Sec) + AMP + diphosphate + H(+). Its pathway is aminoacyl-tRNA biosynthesis; selenocysteinyl-tRNA(Sec) biosynthesis; L-seryl-tRNA(Sec) from L-serine and tRNA(Sec): step 1/1. Catalyzes the attachment of serine to tRNA(Ser). Is also able to aminoacylate tRNA(Sec) with serine, to form the misacylated tRNA L-seryl-tRNA(Sec), which will be further converted into selenocysteinyl-tRNA(Sec). The polypeptide is Serine--tRNA ligase (Mannheimia succiniciproducens (strain KCTC 0769BP / MBEL55E)).